The chain runs to 44 residues: F420-non-reducing hydrogenase vhu subunit U (44 aa).

Positions 20 and 23 each coordinate Ni(2+). A non-standard amino acid (selenocysteine) is located at residue Sec-20. Positions 27 to 44 are cleaved as a propeptide — removed in mature form; the sequence is MIVEDAEGNVVFEIVNDE.

Belongs to the [NiFe]/[NiFeSe] hydrogenase large subunit family. The F420-non-reducing hydrogenase vhu is composed of four subunits; VhuA, VhuD, VhuG and VhuU. Requires Ni(2+) as cofactor.

This is F420-non-reducing hydrogenase vhu subunit U (vhuU) from Methanococcus voltae.